Consider the following 463-residue polypeptide: tRNA-2-methylthio-N(6)-dimethylallyladenosine synthase (463 aa).

The 119-residue stretch at 18–136 folds into the MTTase N-terminal domain; sequence RKLYIETYGC…LPNLVGAAEQ (119 aa). Residues C27, C63, C100, C174, C178, and C181 each contribute to the [4Fe-4S] cluster site. The 233-residue stretch at 160–392 folds into the Radical SAM core domain; it reads GGVHINGFVS…IALQNRLSEE (233 aa). A TRAM domain is found at 395–458; the sequence is KRDIGKTFEV…SATLFGEVVE (64 aa).

This sequence belongs to the methylthiotransferase family. MiaB subfamily. Monomer. [4Fe-4S] cluster is required as a cofactor.

Its subcellular location is the cytoplasm. It carries out the reaction N(6)-dimethylallyladenosine(37) in tRNA + (sulfur carrier)-SH + AH2 + 2 S-adenosyl-L-methionine = 2-methylsulfanyl-N(6)-dimethylallyladenosine(37) in tRNA + (sulfur carrier)-H + 5'-deoxyadenosine + L-methionine + A + S-adenosyl-L-homocysteine + 2 H(+). Its function is as follows. Catalyzes the methylthiolation of N6-(dimethylallyl)adenosine (i(6)A), leading to the formation of 2-methylthio-N6-(dimethylallyl)adenosine (ms(2)i(6)A) at position 37 in tRNAs that read codons beginning with uridine. This chain is tRNA-2-methylthio-N(6)-dimethylallyladenosine synthase, found in Porphyromonas gingivalis (strain ATCC BAA-308 / W83).